We begin with the raw amino-acid sequence, 296 residues long: Urease accessory protein UreD (296 aa).

It belongs to the UreD family. UreD, UreF and UreG form a complex that acts as a GTP-hydrolysis-dependent molecular chaperone, activating the urease apoprotein by helping to assemble the nickel containing metallocenter of UreC. The UreE protein probably delivers the nickel.

Its subcellular location is the cytoplasm. Its function is as follows. Required for maturation of urease via the functional incorporation of the urease nickel metallocenter. This chain is Urease accessory protein UreD, found in Janthinobacterium sp. (strain Marseille) (Minibacterium massiliensis).